The chain runs to 552 residues: Cleavage and polyadenylation specificity factor subunit 6 (552 aa).

Positions 1–213 (MADGVDHIDI…RGRFPGAVPG (213 aa)) are necessary for interaction with NXF1. In terms of domain architecture, RRM spans 81 to 161 (IALYIGNLTR…QNPVVTPCNK (81 aa)). A necessary for interaction with NUDT21/CPSF5 region spans residues 81 to 161 (IALYIGNLTR…QNPVVTPCNK (81 aa)). The necessary for nuclear paraspeckles localization stretch occupies residues 81 to 161 (IALYIGNLTR…QNPVVTPCNK (81 aa)). The residue at position 157 (threonine 157) is a Phosphothreonine. Polar residues predominate over residues 169–180 (MQSRKTTQSGQM). Disordered regions lie at residues 169–411 (MQSR…PLSE) and 479–552 (GIES…YRHR). The GAR signature appears at 202–206 (RGRGR). The span at 207 to 219 (FPGAVPGGDRFPG) shows a compositional bias: low complexity. 3 stretches are compositionally biased toward pro residues: residues 220–265 (PTGP…PLAG), 285–366 (GQPP…PPPT), and 377–388 (GPPPTDPYGRPP). A compositionally biased stretch (basic and acidic residues) spans 389–404 (PYDRGDYGPPGREMDT). A phosphothreonine mark is found at threonine 404 and threonine 407. Residues 404–552 (TARTPLSEAE…RDREREYRHR (149 aa)) form a sufficient for nuclear speckle localization region. The segment at 405 to 552 (ARTPLSEAEF…RDREREYRHR (148 aa)) is necessary for RNA-binding. The interval 481–552 (ESKSYGSGSR…RDREREYRHR (72 aa)) is necessary for interaction with SRSF3, SRSF7 and TRA2B/SFRS10. Residues 491–552 (RRERSRERDH…RDREREYRHR (62 aa)) are arg/Ser-rich domain. Positions 494–504 (RSRERDHSRSR) are enriched in basic and acidic residues. Serine 495, serine 501, serine 512, serine 514, and serine 526 each carry phosphoserine. The segment covering 505–515 (EKSRRHKSRSR) has biased composition (basic residues). The sufficient for nuclear targeting stretch occupies residues 511-552 (KSRSRDRHDDYYRERSRERERHRDRDRDRDRERDREREYRHR). Residues 516–552 (DRHDDYYRERSRERERHRDRDRDRDRERDREREYRHR) show a composition bias toward basic and acidic residues.

The protein belongs to the RRM CPSF6/7 family. As to quaternary structure, component of the cleavage factor Im (CFIm) complex which is a heterotetramer composed of two subunits of NUDT21/CPSF5 and two subunits of CPSF6 or CPSF7 or a heterodimer of CPSF6 and CPSF7. The cleavage factor Im (CFIm) complex associates with the CPSF and CSTF complexes to promote the assembly of the core mRNA 3'-processing machinery. Associates with the exon junction complex (EJC). Associates with the 80S ribosome particle. Interacts (via the RRM domain) with NUDT21/CPSF5; this interaction is direct and enhances binding to RNA. Interacts (via Arg/Ser-rich domain) with FIP1L1 (preferentially via unphosphorylated form and Arg/Glu/Asp-rich domain); this interaction mediates, at least in part, the interaction between the CFIm and CPSF complexes and may be inhibited by CPSF6 hyper-phosphorylation. Interacts (via N-terminus) with NXF1; this interaction is direct. Interacts with SRSF3. Interacts with SRSF7. Interacts with SNRNP70. Interacts with TRA2B/SFRS10. Interacts with UPF1. Interacts with UPF3B. Interacts with VIRMA. Interacts (via Arg/Ser-rich domain) with TNPO3; promoting nuclear import of CPSF6 independently of its phosphorylation status. Interacts with YTHDC1. In terms of processing, phosphorylated. Phosphorylated in the Arg/Ser-rich domain by SRPK1, in vitro. Post-translationally, symmetrically dimethylated on arginine residues in the GAR motif by PRMT5 in a WDR77- and CLNS1A-dependent manner. Asymmetrically dimethylated on arginine residues in the GAR motif by PRMT1.

It is found in the nucleus. Its subcellular location is the nucleoplasm. The protein resides in the nucleus speckle. It localises to the cytoplasm. Its function is as follows. Component of the cleavage factor Im (CFIm) complex that functions as an activator of the pre-mRNA 3'-end cleavage and polyadenylation processing required for the maturation of pre-mRNA into functional mRNAs. CFIm contributes to the recruitment of multiprotein complexes on specific sequences on the pre-mRNA 3'-end, so called cleavage and polyadenylation signals (pA signals). Most pre-mRNAs contain multiple pA signals, resulting in alternative cleavage and polyadenylation (APA) producing mRNAs with variable 3'-end formation. The CFIm complex acts as a key regulator of cleavage and polyadenylation site choice during APA through its binding to 5'-UGUA-3' elements localized in the 3'-untranslated region (UTR) for a huge number of pre-mRNAs. CPSF6 enhances NUDT21/CPSF5 binding to 5'-UGUA-3' elements localized upstream of pA signals and promotes RNA looping, and hence activates directly the mRNA 3'-processing machinery. Plays a role in mRNA export. In Pongo abelii (Sumatran orangutan), this protein is Cleavage and polyadenylation specificity factor subunit 6.